Reading from the N-terminus, the 381-residue chain is MTNFFIPPASVIGRGAVKEVGTRLKQIGAKKALIVTDAFLHSTGLSEEVAKNIREAGLDVAIFPKAQPDPADTQVHEGVDVFKQENCDALVSIGGGSSHDTAKAIGLVAANGGRINDYQGVNSVEKPVVPVVAITTTAGTGSETTSLAVITDSARKVKMPVIDEKITPTVAIVDPELMVKKPAGLTIATGMDALSHAIEAYVAKGATPVTDAFAIQAMKLINEYLPKAVANGEDIEAREAMAYAQYMAGVAFNNGGLGLVHSISHQVGGVYKLQHGICNSVNMPHVCAFNLIAKTERFAHIAELLGENVSGLSTAAAAERAIVALERYNKNFGIPSGYAEMGVKEEDIELLAKNAFEDVCTQSNPRVATVQDIAQIIKNAL.

This sequence belongs to the iron-containing alcohol dehydrogenase family. Homodecamer. The cofactor is Mg(2+). It depends on Zn(2+) as a cofactor.

The protein resides in the cytoplasm. It carries out the reaction methanol + NAD(+) = formaldehyde + NADH + H(+). It functions in the pathway one-carbon metabolism; methanol degradation; formaldehyde from methanol: step 1/1. Its activity is regulated as follows. Stimulated by the activator protein Act which requires the presence of magnesium ions. Inhibited by 1,10-phenanthroline. Its function is as follows. Catalyzes the oxidation of methanol to yield formaldehyde. It possesses a NADH-dependent formaldehyde reductase activity and cannot use NADP. The polypeptide is NAD-dependent methanol dehydrogenase (Bacillus methanolicus).